The following is a 381-amino-acid chain: UDP-N-acetylglucosamine--N-acetylmuramyl-(pentapeptide) pyrophosphoryl-undecaprenol N-acetylglucosamine transferase (381 aa).

Residues 10-12, Asn-124, Arg-165, Ser-190, Ile-245, and Gln-290 contribute to the UDP-N-acetyl-alpha-D-glucosamine site; that span reads TGG. Positions 361–381 are disordered; that stretch reads WGSPAGQERPGHGPVRPPDLA.

The protein belongs to the glycosyltransferase 28 family. MurG subfamily.

The protein localises to the cell inner membrane. It carries out the reaction di-trans,octa-cis-undecaprenyl diphospho-N-acetyl-alpha-D-muramoyl-L-alanyl-D-glutamyl-meso-2,6-diaminopimeloyl-D-alanyl-D-alanine + UDP-N-acetyl-alpha-D-glucosamine = di-trans,octa-cis-undecaprenyl diphospho-[N-acetyl-alpha-D-glucosaminyl-(1-&gt;4)]-N-acetyl-alpha-D-muramoyl-L-alanyl-D-glutamyl-meso-2,6-diaminopimeloyl-D-alanyl-D-alanine + UDP + H(+). It participates in cell wall biogenesis; peptidoglycan biosynthesis. Its function is as follows. Cell wall formation. Catalyzes the transfer of a GlcNAc subunit on undecaprenyl-pyrophosphoryl-MurNAc-pentapeptide (lipid intermediate I) to form undecaprenyl-pyrophosphoryl-MurNAc-(pentapeptide)GlcNAc (lipid intermediate II). The polypeptide is UDP-N-acetylglucosamine--N-acetylmuramyl-(pentapeptide) pyrophosphoryl-undecaprenol N-acetylglucosamine transferase (Anaeromyxobacter sp. (strain Fw109-5)).